The primary structure comprises 272 residues: Flt3 receptor-interacting lectin (272 aa).

An N-terminal signal peptide occupies residues 1 to 8 (MFPSKVKS). Alpha-D-mannopyranose-binding residues include Asp-94 and Gly-112. N-linked (GlcNAc...) asparagine glycosylation is found at Asn-125 and Asn-131. Alpha-D-mannopyranose contacts are provided by residues Asn-152 and 237–238 (QD).

Belongs to the leguminous lectin family. Dimer (alpha/beta)2. Tetramer (alpha/beta)4. Post-translationally, glycosylated at Asn-125 by either a paucimannose type N-glycan (alpha-4) or a single N-acetylglucosamine (alpha-3). Glycosylated at Asn-131 by a paucimannose type N-glycan (alpha-2, alpha-3 and alpha-4). In alpha-2, Asn-125 is deamidated to an Asp, possibly due to the action of intrinsic peptide N-glycosidase (PGNase).

Its subcellular location is the protein storage vacuole lumen. Mannose-binding lectin. Accommodates most effectively a non-reducing terminal alpha-d-mannosyl unit. Strongly precipitates murine IgM but not IgG. In Lablab purpureus (Hyacinth bean), this protein is Flt3 receptor-interacting lectin.